The primary structure comprises 67 residues: Small ribosomal subunit protein bS21 (67 aa).

It belongs to the bacterial ribosomal protein bS21 family.

This chain is Small ribosomal subunit protein bS21, found in Nitratidesulfovibrio vulgaris (strain DSM 19637 / Miyazaki F) (Desulfovibrio vulgaris).